A 269-amino-acid polypeptide reads, in one-letter code: 3-methyl-2-oxobutanoate hydroxymethyltransferase (269 aa).

Residues aspartate 48 and aspartate 87 each contribute to the Mg(2+) site. Residues 48-49, aspartate 87, and lysine 116 each bind 3-methyl-2-oxobutanoate; that span reads DS. Glutamate 118 provides a ligand contact to Mg(2+). Residue glutamate 185 is the Proton acceptor of the active site.

Belongs to the PanB family. As to quaternary structure, homodecamer; pentamer of dimers. Requires Mg(2+) as cofactor.

The protein localises to the cytoplasm. It catalyses the reaction 3-methyl-2-oxobutanoate + (6R)-5,10-methylene-5,6,7,8-tetrahydrofolate + H2O = 2-dehydropantoate + (6S)-5,6,7,8-tetrahydrofolate. It participates in cofactor biosynthesis; (R)-pantothenate biosynthesis; (R)-pantoate from 3-methyl-2-oxobutanoate: step 1/2. Its function is as follows. Catalyzes the reversible reaction in which hydroxymethyl group from 5,10-methylenetetrahydrofolate is transferred onto alpha-ketoisovalerate to form ketopantoate. This is 3-methyl-2-oxobutanoate hydroxymethyltransferase from Campylobacter curvus (strain 525.92).